The chain runs to 344 residues: Heptahelical transmembrane protein 3 (344 aa).

Residues 1 to 76 (MKRRRSAKKS…AFSWHNETLN (76 aa)) are Cytoplasmic-facing. Residues 77 to 97 (IWTHLIGFGIFLWMTVVSCLE) traverse the membrane as a helical segment. Residues 98–147 (TTEISLAGVFNGMAGVRICLSSNQTLLHDSNVTHHISCLTSQGEAIPKWP) lie on the Extracellular side of the membrane. Residues 148 to 168 (WLVYLVGAMGCLICSSVSHLL) form a helical membrane-spanning segment. Residues 169 to 184 (ACHSKRFNVFFWRLDY) lie on the Cytoplasmic side of the membrane. Residues 185–205 (AGISLMIVASFFAPIYYAFSC) form a helical membrane-spanning segment. The Extracellular portion of the chain corresponds to 206-210 (HPNFR). The chain crosses the membrane as a helical span at residues 211–231 (LLYLSSISILGLLAIITLLSP). At 232–244 (ALSTPRFRPFRAN) the chain is on the cytoplasmic side. A helical membrane pass occupies residues 245–265 (LFLAMGSSAVIPATHVLCLYW). Residues 266 to 269 (DHPN) lie on the Extracellular side of the membrane. Residues 270-290 (VFIALGYEIATALSYFVGATF) form a helical membrane-spanning segment. Over 291–312 (YVSRVPERWKPGAFDMAGHSHQ) the chain is Cytoplasmic. The chain crosses the membrane as a helical span at residues 313-333 (IFHVFVVMGALAHCVTTLLII). At 334–344 (DFSRASPSCGF) the chain is on the extracellular side.

Belongs to the ADIPOR family. Expressed in roots and flowers.

It localises to the membrane. May play a role in abiotic stress response. This chain is Heptahelical transmembrane protein 3 (HHP3), found in Arabidopsis thaliana (Mouse-ear cress).